Reading from the N-terminus, the 179-residue chain is Nicotinamide-nucleotide adenylyltransferase (179 aa).

It belongs to the archaeal NMN adenylyltransferase family.

It localises to the cytoplasm. It catalyses the reaction beta-nicotinamide D-ribonucleotide + ATP + H(+) = diphosphate + NAD(+). Its pathway is cofactor biosynthesis; NAD(+) biosynthesis; NAD(+) from nicotinamide D-ribonucleotide: step 1/1. The chain is Nicotinamide-nucleotide adenylyltransferase from Thermoplasma acidophilum (strain ATCC 25905 / DSM 1728 / JCM 9062 / NBRC 15155 / AMRC-C165).